Consider the following 542-residue polypeptide: MARYIFITGGVVSSLGKGLASAALGALLQARGYTVRLRKLDPYLNIDPGTMSPYQHGEVFVTDDGAETDLDLGHYERFTGRPALRDDNITTGRIYQEIIAKERRGDYLGATVQVIPHVTNAIKDFVLSGTDGVDFVLVEIGGTVGDIEGLPFFEAIRQLGNDLPRSHAIYIHLTLLPFIPSAGELKTKPTQHSVKELRSIGIQPHILLCRTDRTIPREERRKLGLFCNVRESAVIEARDVQSIYDVPRAYHAAGLDQEVLAAFGIEPAPKPDMSRWNAVMERVHNPEGEVTIAIVGKYTGLKDAYKSLIEALAHGGMANRINVRIDWIESEVFESDDPAVYLDHVHGILVPGGFGQRGAEGKILAARFARERKVPYFGICFGMQMAVIEAARSLAGVKDANSTEFGPTKEPVVGLMTEWMRGNELQIRAAESDLGGTMRLGAYRASLAPHSKIAAIYGATEISERHRHRYEVNTAYRERLAENGVIFAGLSPDGLLPETIELLDHPWFIGVQFHPELKSRPFEPHPLFASFIAAALEQSRLV.

The amidoligase domain stretch occupies residues M1 to I265. Residue S13 participates in CTP binding. S13 contacts UTP. An ATP-binding site is contributed by S14 to L19. L-glutamine is bound at residue Y54. Residue D71 coordinates ATP. Mg(2+) is bound by residues D71 and E139. CTP is bound by residues D146–E148, K186–Q191, and K222. UTP is bound by residues K186 to Q191 and K222. R238–V240 contacts ATP. The Glutamine amidotransferase type-1 domain occupies T291–L541. Residue G353 participates in L-glutamine binding. Residue C380 is the Nucleophile; for glutamine hydrolysis of the active site. L-glutamine-binding positions include F381–Q384, E404, and R469. Residues H514 and E516 contribute to the active site.

This sequence belongs to the CTP synthase family. In terms of assembly, homotetramer.

The enzyme catalyses UTP + L-glutamine + ATP + H2O = CTP + L-glutamate + ADP + phosphate + 2 H(+). The catalysed reaction is L-glutamine + H2O = L-glutamate + NH4(+). It carries out the reaction UTP + NH4(+) + ATP = CTP + ADP + phosphate + 2 H(+). Its pathway is pyrimidine metabolism; CTP biosynthesis via de novo pathway; CTP from UDP: step 2/2. Its activity is regulated as follows. Allosterically activated by GTP, when glutamine is the substrate; GTP has no effect on the reaction when ammonia is the substrate. The allosteric effector GTP functions by stabilizing the protein conformation that binds the tetrahedral intermediate(s) formed during glutamine hydrolysis. Inhibited by the product CTP, via allosteric rather than competitive inhibition. Its function is as follows. Catalyzes the ATP-dependent amination of UTP to CTP with either L-glutamine or ammonia as the source of nitrogen. Regulates intracellular CTP levels through interactions with the four ribonucleotide triphosphates. The polypeptide is CTP synthase (Methylocella silvestris (strain DSM 15510 / CIP 108128 / LMG 27833 / NCIMB 13906 / BL2)).